Reading from the N-terminus, the 354-residue chain is uncharacterized protein (354 aa).

A disordered region spans residues 96-130 (QVCPASAPNGKRAMKIPKVKEPRGENSSKKSSADQ). Positions 113-127 (KVKEPRGENSSKKSS) are enriched in basic and acidic residues.

This is an uncharacterized protein from Caenorhabditis elegans.